The chain runs to 107 residues: Nucleoid-associated protein GDI3467/Gdia_2910 (107 aa).

The protein belongs to the YbaB/EbfC family. In terms of assembly, homodimer.

The protein localises to the cytoplasm. It is found in the nucleoid. Functionally, binds to DNA and alters its conformation. May be involved in regulation of gene expression, nucleoid organization and DNA protection. This is Nucleoid-associated protein GDI3467/Gdia_2910 from Gluconacetobacter diazotrophicus (strain ATCC 49037 / DSM 5601 / CCUG 37298 / CIP 103539 / LMG 7603 / PAl5).